The chain runs to 157 residues: Small ribosomal subunit protein uS7 (157 aa).

Belongs to the universal ribosomal protein uS7 family. In terms of assembly, part of the 30S ribosomal subunit. Contacts proteins S9 and S11.

Functionally, one of the primary rRNA binding proteins, it binds directly to 16S rRNA where it nucleates assembly of the head domain of the 30S subunit. Is located at the subunit interface close to the decoding center, probably blocks exit of the E-site tRNA. This is Small ribosomal subunit protein uS7 from Eikenella corrodens.